The chain runs to 733 residues: tRNA (guanine(27)-N(2))-dimethyltransferase (733 aa).

The segment covering 1 to 18 (MENMAEEELLPLEKEEVE) has biased composition (acidic residues). Residues 1–78 (MENMAEEELL…LASAPEEAKS (78 aa)) are disordered. Thr26 carries the post-translational modification Phosphothreonine. Low complexity-rich tracts occupy residues 39 to 49 (PDSALDSAPTP) and 57 to 73 (PALA…ASAP). Ser66 carries the post-translational modification Phosphoserine. The short motif at 135–139 (HKLRR) is the Nucleolar localization signal element. Residues 184 to 206 (YHCIICSATITRRTDMLGHVRRH) form a C2H2-type zinc finger. Residues 227–688 (EILKEADTDV…APLMQFKSIL (462 aa)) form the Trm1 methyltransferase domain. Residues Arg260, Asp307, Asp357, and Ala358 each contribute to the S-adenosyl-L-methionine site. Zn(2+)-binding residues include Cys488, Cys491, Cys513, and Cys515. Lys585 is covalently cross-linked (Glycyl lysine isopeptide (Lys-Gly) (interchain with G-Cter in SUMO2)). Phosphoserine occurs at positions 612 and 707.

It belongs to the class I-like SAM-binding methyltransferase superfamily. Trm1 family. In terms of tissue distribution, widely expressed.

The protein localises to the nucleus. It localises to the nucleolus. The enzyme catalyses guanosine(27) in tRNA(Tyr) + 2 S-adenosyl-L-methionine = N(2)-dimethylguanosine(27) in tRNA(Tyr) + 2 S-adenosyl-L-homocysteine + 2 H(+). Specifically dimethylates a single guanine residue at position 27 of tRNA(Tyr) using S-adenosyl-L-methionine as donor of the methyl groups. Dimethylation at position 27 of tRNA(Tyr) is required for efficient translation of tyrosine codons. Also required to maintain 3-(3-amino-3-carboxypropyl)uridine (acp3U) in the D-loop of several cytoplasmic tRNAs. This is tRNA (guanine(27)-N(2))-dimethyltransferase from Homo sapiens (Human).